Here is a 189-residue protein sequence, read N- to C-terminus: GTP cyclohydrolase 1 (189 aa).

Residues Cys-78, His-81, and Cys-150 each contribute to the Zn(2+) site.

Belongs to the GTP cyclohydrolase I family. As to quaternary structure, homomer.

The enzyme catalyses GTP + H2O = 7,8-dihydroneopterin 3'-triphosphate + formate + H(+). It participates in cofactor biosynthesis; 7,8-dihydroneopterin triphosphate biosynthesis; 7,8-dihydroneopterin triphosphate from GTP: step 1/1. The chain is GTP cyclohydrolase 1 from Listeria monocytogenes serotype 4a (strain HCC23).